A 539-amino-acid polypeptide reads, in one-letter code: Phosphoenolpyruvate carboxykinase (ATP) (539 aa).

Substrate-binding residues include arginine 64, tyrosine 206, and lysine 212. ATP-binding positions include lysine 212, histidine 231, and 247–255; that span reads GLSGTGKTT. Lysine 212 and histidine 231 together coordinate Mn(2+). Aspartate 268 contacts Mn(2+). Residues glutamate 296, arginine 332, 448–449, and threonine 454 contribute to the ATP site; that span reads RI. Arginine 332 provides a ligand contact to substrate.

This sequence belongs to the phosphoenolpyruvate carboxykinase (ATP) family. Monomer. Mn(2+) serves as cofactor.

It localises to the cytoplasm. It catalyses the reaction oxaloacetate + ATP = phosphoenolpyruvate + ADP + CO2. It participates in carbohydrate biosynthesis; gluconeogenesis. Functionally, involved in the gluconeogenesis. Catalyzes the conversion of oxaloacetate (OAA) to phosphoenolpyruvate (PEP) through direct phosphoryl transfer between the nucleoside triphosphate and OAA. In Yersinia pseudotuberculosis serotype O:1b (strain IP 31758), this protein is Phosphoenolpyruvate carboxykinase (ATP).